A 185-amino-acid polypeptide reads, in one-letter code: NAD(P)H-quinone oxidoreductase subunit J (185 aa).

This sequence belongs to the complex I 30 kDa subunit family. In terms of assembly, NDH-1 can be composed of about 15 different subunits; different subcomplexes with different compositions have been identified which probably have different functions.

It localises to the cellular thylakoid membrane. The enzyme catalyses a plastoquinone + NADH + (n+1) H(+)(in) = a plastoquinol + NAD(+) + n H(+)(out). It carries out the reaction a plastoquinone + NADPH + (n+1) H(+)(in) = a plastoquinol + NADP(+) + n H(+)(out). Its function is as follows. NDH-1 shuttles electrons from an unknown electron donor, via FMN and iron-sulfur (Fe-S) centers, to quinones in the respiratory and/or the photosynthetic chain. The immediate electron acceptor for the enzyme in this species is believed to be plastoquinone. Couples the redox reaction to proton translocation, and thus conserves the redox energy in a proton gradient. Cyanobacterial NDH-1 also plays a role in inorganic carbon-concentration. The polypeptide is NAD(P)H-quinone oxidoreductase subunit J (Prochlorococcus marinus (strain MIT 9303)).